The primary structure comprises 184 residues: UPF0397 protein SAOUHSC_03020 (184 aa).

Helical transmembrane passes span 11-31 (VVAIGIGAAVFVILGRFVVIP), 44-64 (AFLALISAIFGPFAGLMTGLV), 77-97 (AWWSWVICSGIIGCLYGWIGL), 116-136 (IGQIIANIICWALIAPTLDIL), and 148-168 (QGVISAVLNIISVGIIGTILL).

The protein belongs to the UPF0397 family.

It is found in the cell membrane. The polypeptide is UPF0397 protein SAOUHSC_03020 (Staphylococcus aureus (strain NCTC 8325 / PS 47)).